A 253-amino-acid chain; its full sequence is Transposase for insertion sequence element IS904 (253 aa).

In terms of domain architecture, Integrase catalytic spans 90–253; the sequence is KATAPNKVWL…SPKDFEKYNS (164 aa).

It belongs to the transposase IS3/IS150/IS904 family.

Functionally, involved in the transposition of the insertion sequence. In Lactococcus lactis subsp. lactis (strain IL1403) (Streptococcus lactis), this protein is Transposase for insertion sequence element IS904 (nisX1).